The sequence spans 224 residues: Germin-like protein 8-9 (224 aa).

An N-terminal signal peptide occupies residues 1-22; sequence MASPSFCLFAALLALVSWQAIA. The cysteines at positions 32 and 47 are disulfide-linked. In terms of domain architecture, Cupin type-1 spans 62–212; that stretch reads AMLDTPRKTN…AFQVGKGTID (151 aa). N76 carries an N-linked (GlcNAc...) asparagine glycan. Residues H109, H111, and E116 each coordinate Mn(2+). N135 is a glycosylation site (N-linked (GlcNAc...) asparagine). Position 157 (H157) interacts with Mn(2+).

The protein belongs to the germin family. In terms of assembly, oligomer (believed to be a pentamer but probably hexamer).

The protein localises to the secreted. The protein resides in the extracellular space. Its subcellular location is the apoplast. Functionally, plays a role in broad-spectrum disease resistance. Probably has no oxalate oxidase activity even if the active site is conserved. The protein is Germin-like protein 8-9 of Oryza sativa subsp. japonica (Rice).